A 335-amino-acid chain; its full sequence is Galactosylgalactosylxylosylprotein 3-beta-glucuronosyltransferase 1 (335 aa).

At 1 to 6 (MPKRRD) the chain is on the cytoplasmic side. An essential for transport from endoplasmic reticulum to Golgi apparatus and interaction with SAR1A region spans residues 3 to 5 (KRR). A helical; Signal-anchor for type II membrane protein membrane pass occupies residues 7–27 (ILAIVLIVLPWTLLVTVWHQS). Residues 28–335 (TIAPLLTTHK…KGFTDPTVEI (308 aa)) lie on the Lumenal side of the membrane. Residue 92–94 (PTY) participates in UDP-alpha-D-glucuronate binding. Phosphothreonine occurs at positions 104 and 109. Asp123 lines the UDP-alpha-D-glucuronate pocket. Asn141 carries an N-linked (GlcNAc...) asparagine glycan. UDP-alpha-D-glucuronate is bound by residues Arg166 and Arg171. A glycan (N-linked (GlcNAc...) asparagine) is linked at Asn185. 196–198 (DDD) is a UDP-alpha-D-glucuronate binding site. Asp198 contributes to the Mn(2+) binding site. Positions 246–255 (FDPHRPFAID) are interaction with galactose moiety of substrate glycoprotein. Residue Glu285 is the Proton donor/acceptor of the active site. Residue Asn304 is glycosylated (N-linked (GlcNAc...) asparagine). 312–314 (HTR) contacts UDP-alpha-D-glucuronate.

Belongs to the glycosyltransferase 43 family. In terms of assembly, homodimer. Interacts with SAR1A. The cofactor is Mn(2+). The soluble form derives from the membrane form by proteolytic processing.

It localises to the golgi apparatus membrane. Its subcellular location is the secreted. The catalysed reaction is 3-O-(beta-D-galactosyl-(1-&gt;3)-beta-D-galactosyl-(1-&gt;4)-beta-D-xylosyl)-L-seryl-[protein] + UDP-alpha-D-glucuronate = 3-O-(beta-D-GlcA-(1-&gt;3)-beta-D-Gal-(1-&gt;3)-beta-D-Gal-(1-&gt;4)-beta-D-Xyl)-L-seryl-[protein] + UDP + H(+). The protein operates within protein modification; protein glycosylation. Functionally, involved in the biosynthesis of L2/HNK-1 carbohydrate epitope on glycoproteins. Can also play a role in glycosaminoglycan biosynthesis. Substrates include asialo-orosomucoid (ASOR), asialo-fetuin, and asialo-neural cell adhesion molecule. Requires sphingomyelin for activity: stearoyl-sphingomyelin was the most effective, followed by palmitoyl-sphingomyelin and lignoceroyl-sphingomyelin. Activity was demonstrated only for sphingomyelin with a saturated fatty acid and not for that with an unsaturated fatty acid, regardless of the length of the acyl group. This chain is Galactosylgalactosylxylosylprotein 3-beta-glucuronosyltransferase 1, found in Canis lupus familiaris (Dog).